The primary structure comprises 210 residues: Large ribosomal subunit protein uL4 (210 aa).

Residues 46–85 are disordered; that stretch reads QGTASTLTRSEVRGGGRKPYKQKGTGRARQGSIRTPLRPG. Residues 60–71 are compositionally biased toward basic residues; the sequence is GGRKPYKQKGTG.

Belongs to the universal ribosomal protein uL4 family. As to quaternary structure, part of the 50S ribosomal subunit.

Functionally, one of the primary rRNA binding proteins, this protein initially binds near the 5'-end of the 23S rRNA. It is important during the early stages of 50S assembly. It makes multiple contacts with different domains of the 23S rRNA in the assembled 50S subunit and ribosome. Its function is as follows. Forms part of the polypeptide exit tunnel. The chain is Large ribosomal subunit protein uL4 from Prochlorococcus marinus (strain AS9601).